A 67-amino-acid polypeptide reads, in one-letter code: DNA-directed RNA polymerases I, II, and III subunit RPABC5 (67 aa).

Zn(2+) contacts are provided by Cys7, Cys10, Cys44, and Cys45.

It belongs to the archaeal Rpo10/eukaryotic RPB10 RNA polymerase subunit family. As to quaternary structure, component of the RNA polymerase I (Pol I), RNA polymerase II (Pol II) and RNA polymerase III (Pol III) complexes consisting of at least 13, 12 and 17 subunits, respectively.

Its subcellular location is the nucleus. Functionally, DNA-dependent RNA polymerase catalyzes the transcription of DNA into RNA using the four ribonucleoside triphosphates as substrates. Common component of RNA polymerases I, II and III which synthesize ribosomal RNA precursors, mRNA precursors and many functional non-coding RNAs, and a small RNAs, such as 5S rRNA and tRNAs, respectively. Pol II is the central component of the basal RNA polymerase II transcription machinery. Pols are composed of mobile elements that move relative to each other. In Pol II, RBP10 is part of the core element with the central large cleft. The sequence is that of DNA-directed RNA polymerases I, II, and III subunit RPABC5 from Caenorhabditis briggsae.